Consider the following 369-residue polypeptide: Phenylalanine--tRNA ligase alpha subunit (369 aa).

Glutamate 269 contributes to the Mg(2+) binding site.

This sequence belongs to the class-II aminoacyl-tRNA synthetase family. Phe-tRNA synthetase alpha subunit type 1 subfamily. In terms of assembly, tetramer of two alpha and two beta subunits. Requires Mg(2+) as cofactor.

It is found in the cytoplasm. It carries out the reaction tRNA(Phe) + L-phenylalanine + ATP = L-phenylalanyl-tRNA(Phe) + AMP + diphosphate + H(+). The protein is Phenylalanine--tRNA ligase alpha subunit of Brucella ovis (strain ATCC 25840 / 63/290 / NCTC 10512).